The primary structure comprises 880 residues: Tyrosine-protein kinase receptor TYRO3 (880 aa).

Positions 1 to 30 (MALRRSMGWPGLRPLLLAGLASLLLPGSAA) are cleaved as a signal peptide. Ig-like C2-type domains are found at residues 31–118 (AGLK…TKIS) and 129–209 (PFFT…PAIV). The Extracellular portion of the chain corresponds to 31-419 (AGLKLMGAPV…QGPPHSRTSW (389 aa)). Residues N53, N75, N181, N220, N230, N283, N356, and N370 are each glycosylated (N-linked (GlcNAc...) asparagine). Intrachain disulfides connect C54/C107 and C150/C193. Fibronectin type-III domains follow at residues 217–310 (APFN…TKGL) and 315–406 (APQN…SHDH). Residues 420-440 (VPVVLGVLTALITAAALALIL) traverse the membrane as a helical segment. Over 441–880 (LRKRRKETRF…QQGLLPHSSC (440 aa)) the chain is Cytoplasmic. S456 is modified (phosphoserine). Positions 508–785 (FTLGRMLGKG…LENILGHLSV (278 aa)) constitute a Protein kinase domain. Residues 514–522 (LGKGEFGSV) and K540 contribute to the ATP site. Residue D645 is the Proton acceptor of the active site. A phosphotyrosine; by autocatalysis mark is found at Y671, Y675, Y676, and Y794. Positions 800-864 (AEQPTESGSP…QQPESPLNEN (65 aa)) are disordered. Phosphoserine occurs at positions 808 and 859. Polar residues predominate over residues 849–864 (SPGQLEQQPESPLNEN).

Belongs to the protein kinase superfamily. Tyr protein kinase family. AXL/UFO subfamily. Monomer and homodimer. Interacts (via N-terminus) with extracellular ligands TULP1 and GAS6. Interacts with PIK3R1; this interaction increases PI3-kinase activity. Post-translationally, autophosphorylated. As to expression, abundant in the brain and lower levels in other tissues.

It localises to the cell membrane. The enzyme catalyses L-tyrosyl-[protein] + ATP = O-phospho-L-tyrosyl-[protein] + ADP + H(+). Its function is as follows. Receptor tyrosine kinase that transduces signals from the extracellular matrix into the cytoplasm by binding to several ligands including TULP1 or GAS6. Regulates many physiological processes including cell survival, migration and differentiation. Ligand binding at the cell surface induces dimerization and autophosphorylation of TYRO3 on its intracellular domain that provides docking sites for downstream signaling molecules. Following activation by ligand, interacts with PIK3R1 and thereby enhances PI3-kinase activity. Activates the AKT survival pathway, including nuclear translocation of NF-kappa-B and up-regulation of transcription of NF-kappa-B-regulated genes. TYRO3 signaling plays a role in various processes such as neuron protection from excitotoxic injury, platelet aggregation and cytoskeleton reorganization. Also plays an important role in inhibition of Toll-like receptors (TLRs)-mediated innate immune response by activating STAT1, which selectively induces production of suppressors of cytokine signaling SOCS1 and SOCS3. This is Tyrosine-protein kinase receptor TYRO3 (Tyro3) from Mus musculus (Mouse).